We begin with the raw amino-acid sequence, 776 residues long: Mitochondrial intermediate peptidase (776 aa).

Residues 1–38 (MLNSARTVLARHSARQLYRFRGCLVHQQRHRHQVQRTL) constitute a mitochondrion transit peptide. H560 contributes to the Zn(2+) binding site. E561 is an active-site residue. Residues H564 and H567 each contribute to the Zn(2+) site.

Belongs to the peptidase M3 family. Zn(2+) serves as cofactor.

The protein resides in the mitochondrion matrix. It carries out the reaction Release of an N-terminal octapeptide as second stage of processing of some proteins imported into the mitochondrion.. Cleaves proteins, imported into the mitochondrion, to their mature size. While most mitochondrial precursor proteins are processed to the mature form in one step by mitochondrial processing peptidase (MPP), the sequential cleavage by MIP of an octapeptide after initial processing by MPP is a required step for a subgroup of nuclear-encoded precursor proteins destined for the matrix or the inner membrane. In Coprinopsis cinerea (strain Okayama-7 / 130 / ATCC MYA-4618 / FGSC 9003) (Inky cap fungus), this protein is Mitochondrial intermediate peptidase (OCT1).